The primary structure comprises 471 residues: Delta(24(24(1)))-sterol reductase erg4A (471 aa).

N-linked (GlcNAc...) asparagine glycosylation occurs at Asn15. 8 helical membrane passes run 33-53, 89-109, 130-150, 159-179, 216-236, 244-264, 282-302, and 313-333; these read VTLIMIGFPLLMYYMYIGAVL, WTIYWTFLILEGAGYLYLPGV, AVSSWYLTIAAALILHFTGVL, FGPLMSVAICSGIFVSIVAYI, MFFEVRIPWFILFLLTLGTAL, LVAGEVLFLLMAHFLYANACA, GFMLIFWNLAGVPMSYCHCTL, and HWNPWVLAVWAVAYLFMYWVW. Residues Lys340, Arg344, Leu380, and 392-393 each bind NADP(+); that span reads HY. A helical transmembrane segment spans residues 397-417; that stretch reads VFFAISWGLITGFNSPFPWFY. Residues Asp432, 436-440, and Tyr447 each bind NADP(+); that span reads CRERY.

This sequence belongs to the ERG4/ERG24 family.

The protein resides in the endoplasmic reticulum membrane. It carries out the reaction ergosterol + NADP(+) = ergosta-5,7,22,24(28)-tetraen-3beta-ol + NADPH + H(+). Its pathway is steroid metabolism; ergosterol biosynthesis. Its function is as follows. Delta(24(24(1)))-sterol reductase; part of the third module of ergosterol biosynthesis pathway that includes the late steps of the pathway. Catalyzes the last step of ergosterol biosynthesis by converting ergosta-5,7,22,24(28)-tetraen-3beta-ol into ergosterol. The third module or late pathway involves the ergosterol synthesis itself through consecutive reactions that mainly occur in the endoplasmic reticulum (ER) membrane. Firstly, the squalene synthase erg9 catalyzes the condensation of 2 farnesyl pyrophosphate moieties to form squalene, which is the precursor of all steroids. Squalene synthase is crucial for balancing the incorporation of farnesyl diphosphate (FPP) into sterol and nonsterol isoprene synthesis. Secondly, squalene is converted into lanosterol by the consecutive action of the squalene epoxidase erg1 and the lanosterol synthase erg7. Then, the delta(24)-sterol C-methyltransferase erg6 methylates lanosterol at C-24 to produce eburicol. Eburicol is the substrate of the sterol 14-alpha demethylase encoded by cyp51A and cyp51B, to yield 4,4,24-trimethyl ergosta-8,14,24(28)-trienol. The C-14 reductase erg24 then reduces the C14=C15 double bond which leads to 4,4-dimethylfecosterol. A sequence of further demethylations at C-4, involving the C-4 demethylation complex containing the C-4 methylsterol oxidases erg25A or erg25B, the sterol-4-alpha-carboxylate 3-dehydrogenase erg26 and the 3-keto-steroid reductase erg27, leads to the production of fecosterol via 4-methylfecosterol. The C-8 sterol isomerase erg2 then catalyzes the reaction which results in unsaturation at C-7 in the B ring of sterols and thus converts fecosterol to episterol. The sterol-C5-desaturase erg3B then catalyzes the introduction of a C-5 double bond in the B ring to produce 5-dehydroepisterol. The 2 other sterol-C5-desaturases, erg3A and erg3C, seem to be less important in ergosterol biosynthesis. The C-22 sterol desaturase erg5 further converts 5-dehydroepisterol into ergosta-5,7,22,24(28)-tetraen-3beta-ol by forming the C-22(23) double bond in the sterol side chain. Finally, ergosta-5,7,22,24(28)-tetraen-3beta-ol is substrate of the C-24(28) sterol reductases erg4A and erg4B to produce ergosterol. Possible alternative sterol biosynthetic pathways might exist from fecosterol to ergosterol, depending on the activities of the erg3 isoforms. The sequence is that of Delta(24(24(1)))-sterol reductase erg4A from Aspergillus fumigatus (strain ATCC MYA-4609 / CBS 101355 / FGSC A1100 / Af293) (Neosartorya fumigata).